Reading from the N-terminus, the 316-residue chain is tRNA dimethylallyltransferase (316 aa).

9–16 (GPTASGKS) serves as a coordination point for ATP. 11-16 (TASGKS) contributes to the substrate binding site. Interaction with substrate tRNA stretches follow at residues 34 to 37 (DSMQ) and 158 to 162 (QRLAR).

The protein belongs to the IPP transferase family. Monomer. The cofactor is Mg(2+).

It carries out the reaction adenosine(37) in tRNA + dimethylallyl diphosphate = N(6)-dimethylallyladenosine(37) in tRNA + diphosphate. In terms of biological role, catalyzes the transfer of a dimethylallyl group onto the adenine at position 37 in tRNAs that read codons beginning with uridine, leading to the formation of N6-(dimethylallyl)adenosine (i(6)A). In Hyphomonas neptunium (strain ATCC 15444), this protein is tRNA dimethylallyltransferase.